A 166-amino-acid polypeptide reads, in one-letter code: NAD(P)H-quinone oxidoreductase subunit I, chloroplastic (166 aa).

4Fe-4S ferredoxin-type domains follow at residues 55–84 (GRIH…VDWK) and 95–124 (LNYS…MTEE). The [4Fe-4S] cluster site is built by Cys64, Cys67, Cys70, Cys74, Cys104, Cys107, Cys110, and Cys114.

This sequence belongs to the complex I 23 kDa subunit family. As to quaternary structure, NDH is composed of at least 16 different subunits, 5 of which are encoded in the nucleus. [4Fe-4S] cluster serves as cofactor.

It is found in the plastid. The protein localises to the chloroplast thylakoid membrane. It carries out the reaction a plastoquinone + NADH + (n+1) H(+)(in) = a plastoquinol + NAD(+) + n H(+)(out). The catalysed reaction is a plastoquinone + NADPH + (n+1) H(+)(in) = a plastoquinol + NADP(+) + n H(+)(out). NDH shuttles electrons from NAD(P)H:plastoquinone, via FMN and iron-sulfur (Fe-S) centers, to quinones in the photosynthetic chain and possibly in a chloroplast respiratory chain. The immediate electron acceptor for the enzyme in this species is believed to be plastoquinone. Couples the redox reaction to proton translocation, and thus conserves the redox energy in a proton gradient. In Polymnia canadensis (White-flowered leaf-cup), this protein is NAD(P)H-quinone oxidoreductase subunit I, chloroplastic.